The chain runs to 94 residues: Large ribosomal subunit protein bL25 (94 aa).

This sequence belongs to the bacterial ribosomal protein bL25 family. In terms of assembly, part of the 50S ribosomal subunit; part of the 5S rRNA/L5/L18/L25 subcomplex. Contacts the 5S rRNA. Binds to the 5S rRNA independently of L5 and L18.

This is one of the proteins that binds to the 5S RNA in the ribosome where it forms part of the central protuberance. The sequence is that of Large ribosomal subunit protein bL25 from Salmonella agona (strain SL483).